The sequence spans 230 residues: Orotidine 5'-phosphate decarboxylase (230 aa).

Substrate is bound by residues aspartate 10, lysine 32, aspartate 59–threonine 68, threonine 119, arginine 180, glutamine 189, glycine 209, and arginine 210. The active-site Proton donor is the lysine 61.

The protein belongs to the OMP decarboxylase family. Type 1 subfamily. Homodimer.

It catalyses the reaction orotidine 5'-phosphate + H(+) = UMP + CO2. It participates in pyrimidine metabolism; UMP biosynthesis via de novo pathway; UMP from orotate: step 2/2. Its function is as follows. Catalyzes the decarboxylation of orotidine 5'-monophosphate (OMP) to uridine 5'-monophosphate (UMP). This chain is Orotidine 5'-phosphate decarboxylase, found in Actinobacillus pleuropneumoniae serotype 5b (strain L20).